The following is a 495-amino-acid chain: Major facilitator-type transporter hxnP (495 aa).

Residues 1–24 (MGATATDIEKVPSAGTPDEPKAGE) are disordered. 5 helical membrane-spanning segments follow: residues 36-55 (SFVR…MYFF), 84-104 (LLIL…NLLI), 123-143 (VWGI…LLAI), 145-165 (IILG…FTLF), and 177-197 (VLQS…FGLF). A glycan (N-linked (GlcNAc...) asparagine) is linked at asparagine 200. A run of 5 helical transmembrane segments spans residues 209-229 (WLFI…FWWL), 282-302 (VITF…PIIV), 314-334 (LWTV…AKSS), 341-361 (SLHI…LASI), and 368-388 (GVSY…TCLV). Residue asparagine 395 is glycosylated (N-linked (GlcNAc...) asparagine). A run of 2 helical transmembrane segments spans residues 404-424 (ANTG…AATF) and 436-456 (LVAT…MGTW).

This sequence belongs to the major facilitator superfamily.

It localises to the cell membrane. In terms of biological role, major facilitator-type transporter, part of the hnx cluster involved in the purine degradation. The nicotinate hydroxylase hnxS accepts nicotinate as a substrate and catalyzes the first step of nicotinate catabolism. The major facilitator-type transporters hxnP and hxnZ are probably involved in the uptake of nicotinate-derived metabolites, and the oxidoreductases hxnT and hxnY in the further metabolism of 6-OH nicotinic acid. The sequence is that of Major facilitator-type transporter hxnP from Emericella nidulans (strain FGSC A4 / ATCC 38163 / CBS 112.46 / NRRL 194 / M139) (Aspergillus nidulans).